Here is a 619-residue protein sequence, read N- to C-terminus: P-granule-associated protein deps-1 (619 aa).

The tract at residues Asn62 to Leu101 is required for prg-1 binding. 2 stretches are compositionally biased toward low complexity: residues Ser563–Ser592 and Gly600–Val619. Residues Ser563–Val619 form a disordered region.

As to quaternary structure, interacts (via N-terminus) with prg-1; the interaction is direct. May interact with edg-1. In terms of tissue distribution, expressed in germ cells.

The protein resides in the cytoplasmic granule. It localises to the cytoplasm. Its subcellular location is the perinuclear region. In terms of biological role, component of P-granules which is required for P-granule formation and integrity in adult germ cells. Promotes the accumulation of glh-1 mRNA and localization of pgl-1 to P-granules. Involved in RNA-mediated gene silencing (RNAi) in the germline. In particular, it is required for piwi-interacting RNA (piRNA) gene silencing and positively regulates the formation of secondary 22G-RNAs, which are RNA-dependent RNA polymerase-derived endo-siRNAs, typically 22 nucleotides in length with a 5'guanosine residue. Its role in RNAi may also be through positively regulating the expression of the dsRNA-binding protein rde-4. Plays a role in small RNA-directed transgenerational epigenetic inheritance. This chain is P-granule-associated protein deps-1, found in Caenorhabditis elegans.